Here is a 639-residue protein sequence, read N- to C-terminus: 1-deoxy-D-xylulose-5-phosphate synthase (639 aa).

Thiamine diphosphate contacts are provided by residues histidine 79 and 120-122 (AHS). Aspartate 151 is a binding site for Mg(2+). Residues 152–153 (GA), asparagine 180, tyrosine 289, and glutamate 371 contribute to the thiamine diphosphate site. Asparagine 180 contributes to the Mg(2+) binding site.

The protein belongs to the transketolase family. DXPS subfamily. As to quaternary structure, homodimer. Mg(2+) is required as a cofactor. Requires thiamine diphosphate as cofactor.

It catalyses the reaction D-glyceraldehyde 3-phosphate + pyruvate + H(+) = 1-deoxy-D-xylulose 5-phosphate + CO2. It participates in metabolic intermediate biosynthesis; 1-deoxy-D-xylulose 5-phosphate biosynthesis; 1-deoxy-D-xylulose 5-phosphate from D-glyceraldehyde 3-phosphate and pyruvate: step 1/1. In terms of biological role, catalyzes the acyloin condensation reaction between C atoms 2 and 3 of pyruvate and glyceraldehyde 3-phosphate to yield 1-deoxy-D-xylulose-5-phosphate (DXP). In Allorhizobium ampelinum (strain ATCC BAA-846 / DSM 112012 / S4) (Agrobacterium vitis (strain S4)), this protein is 1-deoxy-D-xylulose-5-phosphate synthase.